The sequence spans 526 residues: 4-alpha-glucanotransferase (526 aa).

It belongs to the disproportionating enzyme family.

The protein resides in the cytoplasm. It carries out the reaction Transfers a segment of a (1-&gt;4)-alpha-D-glucan to a new position in an acceptor, which may be glucose or a (1-&gt;4)-alpha-D-glucan.. In Chlamydia pneumoniae (Chlamydophila pneumoniae), this protein is 4-alpha-glucanotransferase (malQ).